The following is a 140-amino-acid chain: Bacilliredoxin STH2395 (140 aa).

This sequence belongs to the bacilliredoxin family.

In Symbiobacterium thermophilum (strain DSM 24528 / JCM 14929 / IAM 14863 / T), this protein is Bacilliredoxin STH2395.